Consider the following 91-residue polypeptide: Thioredoxin (91 aa).

The region spanning 2–91 (SDSIVHVTDD…SRQSEVEATK (90 aa)) is the Thioredoxin domain. Cysteine 33 and cysteine 36 are oxidised to a cystine.

This sequence belongs to the thioredoxin family.

In terms of biological role, participates in various redox reactions through the reversible oxidation of its active center dithiol to a disulfide and catalyzes dithiol-disulfide exchange reactions. This is Thioredoxin (trxA) from Thiocapsa roseopersicina.